The chain runs to 96 residues: UPF0235 protein MK0273 (96 aa).

The protein belongs to the UPF0235 family.

This Methanopyrus kandleri (strain AV19 / DSM 6324 / JCM 9639 / NBRC 100938) protein is UPF0235 protein MK0273.